The sequence spans 358 residues: Dual-specificity RNA methyltransferase RlmN (358 aa).

Glu86 functions as the Proton acceptor in the catalytic mechanism. One can recognise a Radical SAM core domain in the interval 105-338; that stretch reads RHKRYTICVS…CTIRQSKGLD (234 aa). Residues Cys112 and Cys343 are joined by a disulfide bond. The [4Fe-4S] cluster site is built by Cys119, Cys123, and Cys126. S-adenosyl-L-methionine contacts are provided by residues 169–170, Ser201, 224–226, and Asn300; these read GE and SLH. Residue Cys343 is the S-methylcysteine intermediate of the active site.

This sequence belongs to the radical SAM superfamily. RlmN family. [4Fe-4S] cluster is required as a cofactor.

The protein resides in the cytoplasm. The catalysed reaction is adenosine(2503) in 23S rRNA + 2 reduced [2Fe-2S]-[ferredoxin] + 2 S-adenosyl-L-methionine = 2-methyladenosine(2503) in 23S rRNA + 5'-deoxyadenosine + L-methionine + 2 oxidized [2Fe-2S]-[ferredoxin] + S-adenosyl-L-homocysteine. It carries out the reaction adenosine(37) in tRNA + 2 reduced [2Fe-2S]-[ferredoxin] + 2 S-adenosyl-L-methionine = 2-methyladenosine(37) in tRNA + 5'-deoxyadenosine + L-methionine + 2 oxidized [2Fe-2S]-[ferredoxin] + S-adenosyl-L-homocysteine. Functionally, specifically methylates position 2 of adenine 2503 in 23S rRNA and position 2 of adenine 37 in tRNAs. m2A2503 modification seems to play a crucial role in the proofreading step occurring at the peptidyl transferase center and thus would serve to optimize ribosomal fidelity. The polypeptide is Dual-specificity RNA methyltransferase RlmN (Campylobacter hominis (strain ATCC BAA-381 / DSM 21671 / CCUG 45161 / LMG 19568 / NCTC 13146 / CH001A)).